A 213-amino-acid polypeptide reads, in one-letter code: Uracil phosphoribosyltransferase (213 aa).

Residues Arg77, Arg102, and 129–137 (DPMLATGGS) each bind 5-phospho-alpha-D-ribose 1-diphosphate. Residues Ile198 and 203–205 (GDA) contribute to the uracil site. A 5-phospho-alpha-D-ribose 1-diphosphate-binding site is contributed by Asp204.

This sequence belongs to the UPRTase family. Mg(2+) serves as cofactor.

It carries out the reaction UMP + diphosphate = 5-phospho-alpha-D-ribose 1-diphosphate + uracil. It functions in the pathway pyrimidine metabolism; UMP biosynthesis via salvage pathway; UMP from uracil: step 1/1. Its activity is regulated as follows. Allosterically activated by GTP. Functionally, catalyzes the conversion of uracil and 5-phospho-alpha-D-ribose 1-diphosphate (PRPP) to UMP and diphosphate. The chain is Uracil phosphoribosyltransferase from Mycobacteroides abscessus (strain ATCC 19977 / DSM 44196 / CCUG 20993 / CIP 104536 / JCM 13569 / NCTC 13031 / TMC 1543 / L948) (Mycobacterium abscessus).